A 198-amino-acid polypeptide reads, in one-letter code: Small ribosomal subunit protein uS7 (198 aa).

The protein belongs to the universal ribosomal protein uS7 family. As to quaternary structure, part of the 30S ribosomal subunit.

In terms of biological role, one of the primary rRNA binding proteins, it binds directly to 16S rRNA where it nucleates assembly of the head domain of the 30S subunit. Is located at the subunit interface close to the decoding center. This chain is Small ribosomal subunit protein uS7, found in Desulfurococcus amylolyticus (strain DSM 18924 / JCM 16383 / VKM B-2413 / 1221n) (Desulfurococcus kamchatkensis).